The sequence spans 199 residues: Recombination protein RecR (199 aa).

The C4-type zinc-finger motif lies at 58 to 73 (CRICYNITDTEVCNIC). Residues 81–176 (SLICVVSHPM…KVTRIAHGVP (96 aa)) enclose the Toprim domain.

The protein belongs to the RecR family.

Its function is as follows. May play a role in DNA repair. It seems to be involved in an RecBC-independent recombinational process of DNA repair. It may act with RecF and RecO. The sequence is that of Recombination protein RecR from Thermoanaerobacter pseudethanolicus (strain ATCC 33223 / 39E) (Clostridium thermohydrosulfuricum).